The following is a 553-amino-acid chain: T-complex protein 1 subunit eta (553 aa).

ADP is bound at residue Gly41. Residue Gly41 participates in ATP binding. A Mg(2+)-binding site is contributed by Asp92. ADP-binding residues include Gly93, Thr94, Thr95, Ser96, Ser164, and Ser165. Gly93 lines the ATP pocket. Residue Ser96 coordinates ATP. 2 residues coordinate ATP: Arg398 and Gly409. Gly409, Glu494, and Arg499 together coordinate ADP. Residue Arg499 coordinates ATP. Residues 523–553 (PRSTVDAPPGGRGRGRGQTPQPLRPRSVALS) form a disordered region. Residues 539 to 553 (GQTPQPLRPRSVALS) are compositionally biased toward low complexity.

As to quaternary structure, component of the chaperonin-containing T-complex (TRiC), a hexadecamer composed of two identical back-to-back stacked rings enclosing a protein folding chamber. Each ring is made up of eight different subunits: TCP1/CCT1, CCT2, CCT3, CCT4, CCT5, CCT6A/CCT6, CCT7, CCT8.

Its subcellular location is the cytoplasm. The catalysed reaction is ATP + H2O = ADP + phosphate + H(+). Functionally, component of the chaperonin-containing T-complex (TRiC), a molecular chaperone complex that assists the folding of actin, tubulin and other proteins upon ATP hydrolysis. The polypeptide is T-complex protein 1 subunit eta (Gallus gallus (Chicken)).